Reading from the N-terminus, the 105-residue chain is UPF0145 protein CCNA_02462 (105 aa).

Belongs to the UPF0145 family.

The chain is UPF0145 protein CCNA_02462 from Caulobacter vibrioides (strain NA1000 / CB15N) (Caulobacter crescentus).